The sequence spans 182 residues: uncharacterized protein (182 aa).

The stretch at 66–133 (QKRKRREIKV…NLEIETNSDS (68 aa)) forms a coiled coil.

This is an uncharacterized protein from Acanthamoeba polyphaga (Amoeba).